A 220-amino-acid polypeptide reads, in one-letter code: Inner kinetochore subunit fta3 (220 aa).

Belongs to the CENP-H/MCM16 family. As to quaternary structure, component of the inner kinetochore constitutive centromere-associated network (CCAN) (also known as central kinetochore Sim4 complex in fission yeast), which is composed of at least cnl2, cnp3, cnp20, fta1, fta2, fta3, fta4, fta6, fta7, mal2, mhf1, mhf2, mis6, mis15, mis17, sim4 and wip1.

It localises to the nucleus. It is found in the chromosome. The protein localises to the centromere. Its subcellular location is the kinetochore. In terms of biological role, component of the kinetochore, a multiprotein complex that assembles on centromeric DNA and attaches chromosomes to spindle microtubules, mediating chromosome segregation and sister chromatid segregation during meiosis and mitosis. Component of the inner kinetochore constitutive centromere-associated network (CCAN), which serves as a structural platform for outer kinetochore assembly. Fta2, fta3 and fta4 associate with the central core (cnt) and inner repeat (inr) region of the centromere. This is Inner kinetochore subunit fta3 (fta3) from Schizosaccharomyces pombe (strain 972 / ATCC 24843) (Fission yeast).